A 278-amino-acid chain; its full sequence is Rhomboid protease GlpG (278 aa).

The next 6 membrane-spanning stretches (helical) occupy residues 95–115 (GPLTLGVMALCIVVYILMQIL), 143–163 (AFLHFSLLHITFNLLWWWYLG), 170–190 (LGSGKLFVLAVVSAFFSGWAQ), 192–212 (LFSGALFGGLSGVVYALMGYC), 224–241 (LMLPRGLMVFSVLWLVAG), and 245–267 (ILGMSIANAAHVAGLVLGLLMAF). Residue serine 202 is the Nucleophile of the active site. The active site involves histidine 255.

The protein belongs to the peptidase S54 family.

The protein resides in the cell inner membrane. The enzyme catalyses Cleaves type-1 transmembrane domains using a catalytic dyad composed of serine and histidine that are contributed by different transmembrane domains.. In terms of biological role, rhomboid-type serine protease that catalyzes intramembrane proteolysis. The chain is Rhomboid protease GlpG from Serratia proteamaculans (strain 568).